The sequence spans 161 residues: MPSFDVVSELDKHEVTNAVENAVKELDRRYDLKGKGSFEFKEKELTVNLTAEADFQLEAMIEILKLSLVKRKIDAQCLEIKDAYASGKLMKQEAVLKEGIDKELAKKIVAHVKDAKLKVQAAIQGEQVRITGKKRDDLQEAIAALRAKTFDMPLQFNNFRD.

The protein belongs to the YajQ family.

In terms of biological role, nucleotide-binding protein. The polypeptide is Nucleotide-binding protein PFLU_4927 (Pseudomonas fluorescens (strain SBW25)).